Here is a 62-residue protein sequence, read N- to C-terminus: Beta-defensin 133 (62 aa).

The first 21 residues, 1-21 (MKIHIFLFVLFFFLVPIATRG), serve as a signal peptide directing secretion. Cystine bridges form between Cys32–Cys60 and Cys39–Cys53.

Belongs to the beta-defensin family.

It localises to the secreted. Functionally, has antibacterial activity. In Pan troglodytes (Chimpanzee), this protein is Beta-defensin 133 (DEFB133).